Here is a 540-residue protein sequence, read N- to C-terminus: Chaperonin GroEL 2 (540 aa).

Residues 29–32, 86–90, Gly-413, 476–478, and Asp-492 contribute to the ATP site; these read TLGP, DGTTT, and NAA.

This sequence belongs to the chaperonin (HSP60) family. As to quaternary structure, forms a cylinder of 14 subunits composed of two heptameric rings stacked back-to-back. Interacts with the co-chaperonin GroES.

It localises to the cytoplasm. The enzyme catalyses ATP + H2O + a folded polypeptide = ADP + phosphate + an unfolded polypeptide.. Functionally, together with its co-chaperonin GroES, plays an essential role in assisting protein folding. The GroEL-GroES system forms a nano-cage that allows encapsulation of the non-native substrate proteins and provides a physical environment optimized to promote and accelerate protein folding. The polypeptide is Chaperonin GroEL 2 (Streptomyces albus G).